Consider the following 1067-residue polypeptide: Protein CLEC16A homolog (1067 aa).

The 150-residue stretch at 50-199 (LRCIAEILIW…AVRTISLNVY (150 aa)) folds into the FPL domain. Residues 333–353 (SIVALFLLSLVFLVVSHAPLV) form a helical membrane-spanning segment. Low complexity predominate over residues 409–418 (SSSSYALSED). Disordered regions lie at residues 409 to 434 (SSSS…LDSQ), 837 to 861 (ASSS…PMFS), 876 to 993 (SNSA…SRSH), and 1037 to 1067 (QSSE…IETV). The span at 421–432 (VESSSPATTELD) shows a compositional bias: polar residues. Residues 876–888 (SNSAGVSRTQMAP) show a composition bias toward polar residues. The segment covering 917–926 (RADHSDRERS) has biased composition (basic and acidic residues). Residues 927–947 (PSVSMGSHSSSQSRENSQPRS) are compositionally biased toward low complexity. The span at 951 to 974 (RSRESSPRMPRPRSEEIPLEDFQH) shows a compositional bias: basic and acidic residues. Residues 975–993 (SRNNSPHSRGNPSPASRSH) show a composition bias toward polar residues. A compositionally biased stretch (basic and acidic residues) spans 1057-1067 (EGRRRGAIETV).

This sequence belongs to the CLEC16A/gop-1 family. Interacts with the class C Vps-HOPS complex components; Car, Dor and Vps16a.

The protein resides in the cytoplasmic vesicle. It localises to the autophagosome membrane. It is found in the late endosome membrane. Its subcellular location is the golgi apparatus membrane. Functionally, required for mitophagy, autophagy and endosome maturation, possibly by acting in multiple membrane trafficking pathways. Required for endosome trafficking and maturation. Functions with the class C Vps-HOPS complex member Vps16a to promote endosomal maturation into degradative late endosomes and lysosomes. In response to starvation, functions at an early stage of autophagy to promote autophagosome growth and efficient autophagy. Essential for the recruitment of lva-positive Golgi elements to autophagosomes. Likely to function by promoting membrane traffic from the Golgi complex to the developing autophagosomes. Also regulates synaptic growth at the neuromuscular junctions (NMJ) by down-regulating BMP signaling. This Drosophila melanogaster (Fruit fly) protein is Protein CLEC16A homolog.